A 270-amino-acid chain; its full sequence is 5'-nucleotidase SurE (270 aa).

Residues Asp-14, Asp-15, Ser-46, and Asn-104 each coordinate a divalent metal cation.

The protein belongs to the SurE nucleotidase family. A divalent metal cation is required as a cofactor.

The protein localises to the cytoplasm. The enzyme catalyses a ribonucleoside 5'-phosphate + H2O = a ribonucleoside + phosphate. Functionally, nucleotidase that shows phosphatase activity on nucleoside 5'-monophosphates. The sequence is that of 5'-nucleotidase SurE from Microcystis aeruginosa (strain NIES-843 / IAM M-2473).